The chain runs to 415 residues: Coiled-coil domain-containing glutamate-rich protein 1 (415 aa).

Residues 1–11 (MTQTLDTKEDP) are compositionally biased toward basic and acidic residues. Disordered regions lie at residues 1–20 (MTQT…GWAS), 29–64 (FGPR…QQYG), 133–162 (RPPG…SPPV), 202–241 (QEKL…GQED), and 255–372 (PSLV…PLEM). Basic residues-rich tracts occupy residues 31 to 46 (PRRR…RPRY) and 135 to 156 (PGRK…RRSA). 2 coiled-coil regions span residues 197-224 (EDMR…STAS) and 264-366 (DEEK…EEEN). Residues 211–220 (ALRAQQAQAA) show a composition bias toward low complexity. Acidic residues predominate over residues 275–363 (VEEEEEGERE…EGLAEDEQTE (89 aa)).

The protein resides in the nucleus. Regulator of histone epigenetic modifications and chromatin compaction into the sperm head, required for histone-to-protamine (HTP) transition. HTP is a key event in which somatic histones are first replaced by testis-specific histone variants, then transition proteins (TNPs) are incorporated into the spermatid nucleus, and finally protamines (PRMs) replace the TNPs to promote chromatin condensation. This is Coiled-coil domain-containing glutamate-rich protein 1 (CCER1) from Bos taurus (Bovine).